The chain runs to 206 residues: LexA repressor (206 aa).

Positions 28–48 (RAEIARELGFRSANAAEEHLK) form a DNA-binding region, H-T-H motif. Residues serine 123 and lysine 160 each act as for autocatalytic cleavage activity in the active site.

Belongs to the peptidase S24 family. In terms of assembly, homodimer.

It carries out the reaction Hydrolysis of Ala-|-Gly bond in repressor LexA.. Functionally, represses a number of genes involved in the response to DNA damage (SOS response), including recA and lexA. In the presence of single-stranded DNA, RecA interacts with LexA causing an autocatalytic cleavage which disrupts the DNA-binding part of LexA, leading to derepression of the SOS regulon and eventually DNA repair. This is LexA repressor from Vibrio atlanticus (strain LGP32) (Vibrio splendidus (strain Mel32)).